We begin with the raw amino-acid sequence, 423 residues long: E3 ubiquitin-protein ligase makorin-2 (423 aa).

2 consecutive C3H1-type zinc fingers follow at residues 2–29 (STKQVTCRYFLHGVCREGSRCLFSHDLN) and 31–58 (SKPSTICKFYQRGVCAYGERCRYDHIKP). Residues 59 to 90 (SSRGGGGGAPEDQAGGGGAGGGGAGIGGAGGG) are disordered. The span at 61 to 90 (RGGGGGAPEDQAGGGGAGGGGAGIGGAGGG) shows a compositional bias: gly residues. The C3H1-type 3 zinc finger occupies 162-189 (QNLPQLCPYAANGHCFYEENCTYLHGDL). The segment at 190 to 219 (CEVCGLQVLHPHDSEQRRAHEKMCLAAFEA) is makorin-type Cys-His. The RING-type zinc-finger motif lies at 235–289 (CSICMEVVVQKANPSDRRFGILSSCCHTFCLACIRKWRCTRTFSNTIIKSCPECR). Residues 318–347 (GVSKKACKYFDQGRGSCPFGGKCLYLHAFP) form a C3H1-type 4 zinc finger.

It localises to the cytoplasm. Its subcellular location is the nucleus. The enzyme catalyses S-ubiquitinyl-[E2 ubiquitin-conjugating enzyme]-L-cysteine + [acceptor protein]-L-lysine = [E2 ubiquitin-conjugating enzyme]-L-cysteine + N(6)-ubiquitinyl-[acceptor protein]-L-lysine.. Its pathway is protein modification; protein ubiquitination. Its function is as follows. E3 ubiquitin ligase catalyzing the covalent attachment of ubiquitin moieties onto substrate proteins. Inhibits neurogenesis and axis formation during embryonic development by modulating the phosphatidylinositol 3-kinase (PI3K) pathway. Acts downstream of PI3K and akt1 to up-regulate gsk3b mRNA expression. This Seriola quinqueradiata (Five-ray yellowtail) protein is E3 ubiquitin-protein ligase makorin-2 (mkrn2).